We begin with the raw amino-acid sequence, 177 residues long: Large ribosomal subunit protein uL6 (177 aa).

This sequence belongs to the universal ribosomal protein uL6 family. Part of the 50S ribosomal subunit.

This protein binds to the 23S rRNA, and is important in its secondary structure. It is located near the subunit interface in the base of the L7/L12 stalk, and near the tRNA binding site of the peptidyltransferase center. This is Large ribosomal subunit protein uL6 from Brucella canis (strain ATCC 23365 / NCTC 10854 / RM-666).